A 482-amino-acid polypeptide reads, in one-letter code: Sensor histidine kinase CusS (482 aa).

Residues 1–15 are Cytoplasmic-facing; it reads MVSKPFQRPFSLATR. Residues 16-36 form a helical membrane-spanning segment; the sequence is LTFFISLATIAAFFAFAWIMI. Over 37 to 186 the chain is Periplasmic; it reads HSVKVHFAEQ…LHYINDLMNK (150 aa). Residues 187–207 form a helical membrane-spanning segment; it reads LIMTASVISILIVFIVLLAVH. One can recognise an HAMP domain in the interval 207–260; that stretch reads HKGHAPIRSVSRQIQNITSKDLDVRLDPQTVPIELEQLVLSFNHMIERIEDVFT. Over 208-482 the chain is Cytoplasmic; sequence KGHAPIRSVS…RFVIVLPERG (275 aa). A Histidine kinase domain is found at 268–482; the sequence is DIAHEIRTPI…RFVIVLPERG (215 aa). His271 bears the Phosphohistidine; by autocatalysis mark.

Autophosphorylated.

It localises to the cell inner membrane. It catalyses the reaction ATP + protein L-histidine = ADP + protein N-phospho-L-histidine.. Its function is as follows. Member of the two-component regulatory system CusS/CusR involved in response to copper and silver. Acts as a copper/silver ion sensor. Activates CusR by phosphorylation. This Escherichia coli O157:H7 protein is Sensor histidine kinase CusS (cusS).